A 325-amino-acid chain; its full sequence is Replication factor C small subunit (325 aa).

Residue 52 to 59 coordinates ATP; sequence GPAGVGKT.

Belongs to the activator 1 small subunits family. RfcS subfamily. As to quaternary structure, heteromultimer composed of small subunits (RfcS) and large subunits (RfcL).

In terms of biological role, part of the RFC clamp loader complex which loads the PCNA sliding clamp onto DNA. The sequence is that of Replication factor C small subunit from Natronomonas pharaonis (strain ATCC 35678 / DSM 2160 / CIP 103997 / JCM 8858 / NBRC 14720 / NCIMB 2260 / Gabara) (Halobacterium pharaonis).